Here is a 716-residue protein sequence, read N- to C-terminus: Fatty acid oxidation complex subunit alpha (716 aa).

The enoyl-CoA hydratase/isomerase stretch occupies residues 1–189; it reads MIYQSPTIQV…KVGAVDAVVA (189 aa). Asp296 provides a ligand contact to substrate. Positions 311-716 are 3-hydroxyacyl-CoA dehydrogenase; that stretch reads KDVKSAAVLG…AANNGSYYQA (406 aa). NAD(+)-binding positions include Met324, Asp343, 400–402, Lys407, and Ser429; that span reads VVE. His450 acts as the For 3-hydroxyacyl-CoA dehydrogenase activity in catalysis. NAD(+) is bound at residue Asn453. Positions 500 and 660 each coordinate substrate.

In the N-terminal section; belongs to the enoyl-CoA hydratase/isomerase family. It in the C-terminal section; belongs to the 3-hydroxyacyl-CoA dehydrogenase family. Heterotetramer of two alpha chains (FadB) and two beta chains (FadA).

It catalyses the reaction a (3S)-3-hydroxyacyl-CoA + NAD(+) = a 3-oxoacyl-CoA + NADH + H(+). The enzyme catalyses a (3S)-3-hydroxyacyl-CoA = a (2E)-enoyl-CoA + H2O. It carries out the reaction a 4-saturated-(3S)-3-hydroxyacyl-CoA = a (3E)-enoyl-CoA + H2O. The catalysed reaction is (3S)-3-hydroxybutanoyl-CoA = (3R)-3-hydroxybutanoyl-CoA. It catalyses the reaction a (3Z)-enoyl-CoA = a 4-saturated (2E)-enoyl-CoA. The enzyme catalyses a (3E)-enoyl-CoA = a 4-saturated (2E)-enoyl-CoA. It functions in the pathway lipid metabolism; fatty acid beta-oxidation. In terms of biological role, involved in the aerobic and anaerobic degradation of long-chain fatty acids via beta-oxidation cycle. Catalyzes the formation of 3-oxoacyl-CoA from enoyl-CoA via L-3-hydroxyacyl-CoA. It can also use D-3-hydroxyacyl-CoA and cis-3-enoyl-CoA as substrate. This Shewanella sp. (strain MR-7) protein is Fatty acid oxidation complex subunit alpha.